The following is a 619-amino-acid chain: MPQLNGGGGDDLGANDELISFKDEGEQEEKSSENSSAERDLADVKSSLVNESETNQNSSSDSEAERRPPPRSESFRDKSRESLEEAAKRQDGGLFKGPPYPGYPFIMIPDLTSPYLPNGSLSPTARTLHFQSGSTHYSAYKTIEHQIAVQYLQMKWPLLDVQAGSLQSRQALKDARSPSPAHIVSNKVPVVQHPHHVHPLTPLITYSNEHFTPGNPPPHLPADVDPKTGIPRPPHPPDISPYYPLSPGTVGQIPHPLGWLVPQQGQPVYPITTGGFRHPYPTALTVNASMSRFPPHMVPPHHTLHTTGIPHPAIVTPTVKQESSQSDVGSLHSSKHQDSKKEEEKKKPHIKKPLNAFMLYMKEMRAKVVAECTLKESAAINQILGRRWHALSREEQAKYYELARKERQLHMQLYPGWSARDNYGKKKKRKRDKQPGETNEHSECFLNPCLSLPPITDLSAPKKCRARFGLDQQNNWCGPCRRKKKCVRYIQGEGSCLSPPSSDGSLLDSPPPSPNLLGSPPRDAKSQTEQTQPLSLSLKPDPLAHLSMMPPPPALLLAEATHKASALCPNGALDLPPAALQPAAPSSSIAQPSTSSLHSHSSLAGTQPQPLSLVTKSLE.

Over residues 1-11 (MPQLNGGGGDD) the composition is skewed to gly residues. The interval 1-53 (MPQLNGGGGDDLGANDELISFKDEGEQEEKSSENSSAERDLADVKSSLVNESE) is CTNNB1-binding. Residues 1-96 (MPQLNGGGGD…AKRQDGGLFK (96 aa)) form a disordered region. The segment covering 19-43 (ISFKDEGEQEEKSSENSSAERDLAD) has biased composition (basic and acidic residues). Lys22 participates in a covalent cross-link: Glycyl lysine isopeptide (Lys-Gly) (interchain with G-Cter in SUMO2). Residues 47–57 (SLVNESETNQN) show a composition bias toward polar residues. Over residues 63 to 91 (EAERRPPPRSESFRDKSRESLEEAAKRQD) the composition is skewed to basic and acidic residues. Thr201 and Thr212 each carry phosphothreonine; by NLK. Positions 201–395 (TPLITYSNEH…RRWHALSREE (195 aa)) are mediates interaction with MAD2L2. Positions 318–328 (TVKQESSQSDV) are enriched in polar residues. Disordered stretches follow at residues 318–350 (TVKQESSQSDVGSLHSSKHQDSKKEEEKKKPHI), 420–441 (RDNYGKKKKRKRDKQPGETNEH), 496–547 (CLSP…AHLS), and 574–619 (DLPP…KSLE). Residue Lys320 forms a Glycyl lysine isopeptide (Lys-Gly) (interchain with G-Cter in SUMO) linkage. Positions 335–346 (KHQDSKKEEEKK) are enriched in basic and acidic residues. The segment at residues 350-418 (IKKPLNAFML…LHMQLYPGWS (69 aa)) is a DNA-binding region (HMG box). Positions 425–430 (KKKKRK) match the Nuclear localization signal motif. The segment at 459 to 505 (SAPKKCRARFGLDQQNNWCGPCRRKKKCVRYIQGEGSCLSPPSSDGS) is promoter-specific activation domain. The span at 496 to 508 (CLSPPSSDGSLLD) shows a compositional bias: low complexity. A Glycyl lysine isopeptide (Lys-Gly) (interchain with G-Cter in SUMO2) cross-link involves residue Lys539. Low complexity predominate over residues 574–603 (DLPPAALQPAAPSSSIAQPSTSSLHSHSSL). Polar residues predominate over residues 604–619 (AGTQPQPLSLVTKSLE).

It belongs to the TCF/LEF family. In terms of assembly, interacts with TGFB1I1. Interacts with CTNNB1 (via the armadillo repeat); forms stable transcription complex. Interacts with EP300. Interacts with NLK. Interacts with CCDC85B (probably through the HMG box); prevents interaction with CTNNB1. Interacts with TNIK. Interacts with MAD2L2; prevents TCF7L2/TCF4 binding to promZIPK/DAPK3oters, negatively modulating its transcriptional activity. Interacts with ZIPK/DAPK3. Interacts with XIAP/BIRC4 and TLE3. Interacts with DDIT3/CHOP. The CTNNB1 and TCF7L2/TCF4 complex interacts with PML (isoform PML-4). Identified in a complex with CTNNB1 and FERMT2. Interacts with SPIN1. Interacts with C11orf84/SPINDOC in a SPIN1-dependent manner. Interacts with DAZAP2; the interaction results in localization of DAZAP2 to the nucleus. In vitro, phosphorylated by TNIK. Post-translationally, phosphorylated at Thr-201 and/or Thr-212 by NLK. Phosphorylation by NLK at these sites inhibits DNA-binding by TCF7L2/TCF4, thereby preventing transcriptional activation of target genes of the canonical Wnt/beta-catenin signaling pathway. In terms of processing, polysumoylated. Sumoylation is enhanced by PIAS family members and desumoylation is enhanced by SENP2. Sumoylation/desumoylation regulates TCF7L2/TCF4 transcription activity in the Wnt/beta-catenin signaling pathway without altering interaction with CTNNB1 nor binding to DNA. Detected in epithelium from small intestine, with the highest expression at the top of the crypts and a gradient of expression from crypt to villus. Detected in colon epithelium and colon cancer, and in epithelium from mammary gland and carcinomas derived therefrom.

It is found in the nucleus. The protein resides in the PML body. Functionally, participates in the Wnt signaling pathway and modulates MYC expression by binding to its promoter in a sequence-specific manner. Acts as a repressor in the absence of CTNNB1, and as activator in its presence. Activates transcription from promoters with several copies of the Tcf motif 5'-CCTTTGATC-3' in the presence of CTNNB1. TLE1, TLE2, TLE3 and TLE4 repress transactivation mediated by TCF7L2/TCF4 and CTNNB1. Expression of dominant-negative mutants results in cell-cycle arrest in G1. Necessary for the maintenance of the epithelial stem-cell compartment of the small intestine. This Homo sapiens (Human) protein is Transcription factor 7-like 2 (TCF7L2).